A 397-amino-acid chain; its full sequence is Proteinase-activated receptor 2 (397 aa).

A signal peptide spans Met1–Thr25. A propeptide spans Ile26–Arg36 (removed for receptor activation). Asn30 is a glycosylation site (N-linked (GlcNAc...) asparagine). Topologically, residues Ser37–Gly71 are extracellular. The chain crosses the membrane as a helical span at residues Lys72–Leu101. Residues Phe102–His108 are Cytoplasmic-facing. A helical membrane pass occupies residues Pro109–His137. Topologically, residues Gly138 to Asn149 are extracellular. Residues Cys148 and Cys226 are joined by a disulfide bond. Residues Val150–Ile177 form a helical membrane-spanning segment. The Cytoplasmic segment spans residues Val178–His183. Residues Ser184 to Val211 form a helical membrane-spanning segment. The Extracellular portion of the chain corresponds to Val212–Leu235. Residue Asn222 is glycosylated (N-linked (GlcNAc...) asparagine). The chain crosses the membrane as a helical span at residues Val236–Leu269. At Arg270–Asn277 the chain is on the cytoplasmic side. Residues Ser278–Gln317 form a helical membrane-spanning segment. The Extracellular segment spans residues Gly318–Tyr323. A helical membrane pass occupies residues Ala324 to Val347. Topologically, residues Ser348 to Tyr397 are cytoplasmic. The S-palmitoyl cysteine moiety is linked to residue Cys361. The disordered stretch occupies residues Ser373–Tyr397. Over residues Ser383–Tyr397 the composition is skewed to low complexity.

It belongs to the G-protein coupled receptor 1 family. Interacts with TLR4, COPS5 and TMED2. Interacts with GNAQ, GNA11, GNA12, GNA13 and GNA14. In terms of processing, a proteolytic cleavage generates a new N-terminus that functions as a tethered ligand. Activating serine proteases include trypsin, mast cell tryptase, coagulation factors VII and Xa, myeloblastin/PRTN3 and membrane-type serine protease 1/ST14. Subsequent cleavage by serine proteases, including neutrophil elastase and cathepsin G, leads to receptor deactivation. At least in part, implicated proteases are also shown to activate the receptor; the glycosylation status of the receptor is thought to contribute to the difference. In addition to conventional trypsin-like proteases activated by other proteases and glycosidases derived from bacteria, fungi and insects. Activated by serine protease allergens such as dust mite Der p3 and Der p9 and mold Pen c13. Activated by P.gingivalis arginine-specific (trypsin-like) cysteine proteinases called gingipains. Activated by S.griseus exogenous chitinase. Activated by A.alternata aspartate protease; the cleavage generates non-conventional processed forms. Proteolytically cleaved by coagulation factor Xa (F10); cleavage results in activation of F2RL1-dependent signaling. Post-translationally, N-glycosylated and sialylated. Multiple phosphorylated on serine and threonine residues in the cytoplasmic region upon receptor activation; required for receptor desensitization and recruitment of beta-arrestin. In terms of processing, monoubiquitinated by CBL at the plasma membrane and in early endosomes; not required for receptor endocytosis but for translocation to late endosomes or lysosomes. Deubiquitination involves STAMBP and USP8; required for lysosomal trafficking and receptor degradation. Widely expressed in tissues with especially high levels in pancreas, liver, kidney, small intestine, and colon. Moderate expression is detected in many organs, but none in brain or skeletal muscle. Expressed in endothelial cells.

It localises to the cell membrane. Its activity is regulated as follows. Activated upon interaction by mucunain, a cowhage (Mucuna pruriens) plant cysteine proteinase. Receptor for trypsin and trypsin-like enzymes coupled to G proteins. Its function is mediated through the activation of several signaling pathways including phospholipase C (PLC), intracellular calcium, mitogen-activated protein kinase (MAPK), I-kappaB kinase/NF-kappaB and Rho. Can also be transactivated by cleaved F2R/PAR1. Involved in modulation of inflammatory responses and regulation of innate and adaptive immunity, and acts as a sensor for proteolytic enzymes generated during infection. Generally is promoting inflammation. Can signal synergistically with TLR4 and probably TLR2 in inflammatory responses and modulates TLR3 signaling. Has a protective role in establishing the endothelial barrier; the activity involves coagulation factor X. Regulates endothelial cell barrier integrity during neutrophil extravasation, probably following proteolytic cleavage by PRTN3. Proposed to have a bronchoprotective role in airway epithelium, but also shown to compromise the airway epithelial barrier by interrupting E-cadherin adhesion. Involved in the regulation of vascular tone; activation results in hypotension presumably mediated by vasodilation. Associates with a subset of G proteins alpha subunits such as GNAQ, GNA11, GNA14, GNA12 and GNA13, but probably not with G(o)-alpha, G(i) subunit alpha-1 and G(i) subunit alpha-2. However, according to PubMed:21627585 can signal through G(i) subunit alpha. Believed to be a class B receptor which internalizes as a complex with arrestin and traffic with it to endosomal vesicles, presumably as desensitized receptor, for extended periods of time. Mediates inhibition of TNF-alpha stimulated JNK phosphorylation via coupling to GNAQ and GNA11; the function involves dissociation of RIPK1 and TRADD from TNFR1. Mediates phosphorylation of nuclear factor NF-kappa-B RELA subunit at 'Ser-536'; the function involves IKBKB and is predominantly independent of G proteins. Involved in cellular migration. Involved in cytoskeletal rearrangement and chemotaxis through beta-arrestin-promoted scaffolds; the function is independent of GNAQ and GNA11 and involves promotion of cofilin dephosphorylation and actin filament severing. Induces redistribution of COPS5 from the plasma membrane to the cytosol and activation of the JNK cascade is mediated by COPS5. Involved in the recruitment of leukocytes to the sites of inflammation and is the major PAR receptor capable of modulating eosinophil function such as pro-inflammatory cytokine secretion, superoxide production and degranulation. During inflammation promotes dendritic cell maturation, trafficking to the lymph nodes and subsequent T-cell activation. Involved in antimicrobial response of innate immune cells; activation enhances phagocytosis of Gram-positive and killing of Gram-negative bacteria. Acts synergistically with interferon-gamma in enhancing antiviral responses. Implicated in a number of acute and chronic inflammatory diseases such as of the joints, lungs, brain, gastrointestinal tract, periodontium, skin, and vascular systems, and in autoimmune disorders. Probably mediates activation of pro-inflammatory and pro-fibrotic responses in fibroblasts, triggered by coagulation factor Xa (F10). Mediates activation of barrier protective signaling responses in endothelial cells, triggered by coagulation factor Xa (F10). The polypeptide is Proteinase-activated receptor 2 (F2RL1) (Homo sapiens (Human)).